The chain runs to 301 residues: Glucose-1-phosphate adenylyltransferase large subunit (301 aa).

The protein belongs to the bacterial/plant glucose-1-phosphate adenylyltransferase family. Heterotetramer.

The protein localises to the plastid. It localises to the chloroplast. Its subcellular location is the amyloplast. The enzyme catalyses alpha-D-glucose 1-phosphate + ATP + H(+) = ADP-alpha-D-glucose + diphosphate. The protein operates within glycan biosynthesis; starch biosynthesis. Its activity is regulated as follows. Insensitive to 3'phosphoglycerate and orthophosphate. In terms of biological role, this protein plays a role in synthesis of starch. It catalyzes the synthesis of the activated glycosyl donor, ADP-glucose from Glc-1-P and ATP. In Triticum aestivum (Wheat), this protein is Glucose-1-phosphate adenylyltransferase large subunit (AGA.1).